A 345-amino-acid polypeptide reads, in one-letter code: Tubulin-folding cofactor C (345 aa).

The residue at position 1 (Met1) is an N-acetylmethionine. Residues 1–10 (MEDDGQSSVA) show a composition bias toward polar residues. The tract at residues 1–83 (MEDDGQSSVA…SRLASSSTDS (83 aa)) is disordered. Over residues 23–39 (DMLERLSARHQARKSDS) the composition is skewed to basic and acidic residues. A compositionally biased stretch (low complexity) spans 40-55 (PDSSSSSSSTLESTSS). Basic and acidic residues predominate over residues 61–73 (SDSKRSIESRIAE). Over residues 74-83 (SRLASSSTDS) the composition is skewed to low complexity. The C-CAP/cofactor C-like domain occupies 169-318 (PPKLVPVRDS…NWANVDDFRW (150 aa)).

It belongs to the TBCC family. As to quaternary structure, supercomplex made of cofactors A to E. Cofactors A and D function by capturing and stabilizing tubulin in a quasi-native conformation. Cofactor E binds to the cofactor D-tubulin complex; interaction with cofactor C then causes the release of tubulin polypeptides that are committed to the native state. As to expression, ubiquitously expressed (at protein level). Present in leaves, roots, flowers, and stems.

Its subcellular location is the cytoplasm. Its function is as follows. Essential tubulin-folding protein involved in the final step of the tubulin folding pathway. Required for continuous microtubule cytoskeleton organization, mitotic division, cytokinesis, and to couple cell cycle progression to cell division in embryos and endosperms. Not essential for cell viability. Binds probably to the multimeric supercomplex, stimulating GTP hydrolysis by the bound beta-tubulin and the release of the alpha-/beta-tubulin heterodimer. This is Tubulin-folding cofactor C (TFCC) from Arabidopsis thaliana (Mouse-ear cress).